The sequence spans 59 residues: Small ribosomal subunit protein bS21A (59 aa).

It belongs to the bacterial ribosomal protein bS21 family.

The sequence is that of Small ribosomal subunit protein bS21A from Gloeobacter violaceus (strain ATCC 29082 / PCC 7421).